A 207-amino-acid polypeptide reads, in one-letter code: Protein GrpE (207 aa).

Belongs to the GrpE family. As to quaternary structure, homodimer.

The protein resides in the cytoplasm. Functionally, participates actively in the response to hyperosmotic and heat shock by preventing the aggregation of stress-denatured proteins, in association with DnaK and GrpE. It is the nucleotide exchange factor for DnaK and may function as a thermosensor. Unfolded proteins bind initially to DnaJ; upon interaction with the DnaJ-bound protein, DnaK hydrolyzes its bound ATP, resulting in the formation of a stable complex. GrpE releases ADP from DnaK; ATP binding to DnaK triggers the release of the substrate protein, thus completing the reaction cycle. Several rounds of ATP-dependent interactions between DnaJ, DnaK and GrpE are required for fully efficient folding. The polypeptide is Protein GrpE (Pelodictyon phaeoclathratiforme (strain DSM 5477 / BU-1)).